The following is a 202-amino-acid chain: Glycerol-3-phosphate acyltransferase (202 aa).

Transmembrane regions (helical) follow at residues 2–22 (MIIV…GFVI), 54–74 (FLVT…PLWL), 85–105 (FFTN…YPVY), 120–140 (VVLG…FIIL), 141–161 (KIFK…VIGS), and 162–182 (LIIQ…ILII).

Belongs to the PlsY family. In terms of assembly, probably interacts with PlsX.

Its subcellular location is the cell membrane. The catalysed reaction is an acyl phosphate + sn-glycerol 3-phosphate = a 1-acyl-sn-glycero-3-phosphate + phosphate. It participates in lipid metabolism; phospholipid metabolism. Its function is as follows. Catalyzes the transfer of an acyl group from acyl-phosphate (acyl-PO(4)) to glycerol-3-phosphate (G3P) to form lysophosphatidic acid (LPA). This enzyme utilizes acyl-phosphate as fatty acyl donor, but not acyl-CoA or acyl-ACP. This is Glycerol-3-phosphate acyltransferase from Staphylococcus aureus (strain bovine RF122 / ET3-1).